A 472-amino-acid chain; its full sequence is Interferon-induced protein with tetratricopeptide repeats 2 (472 aa).

N-acetylserine is present on serine 2. 9 TPR repeats span residues 51–89 (ATMC…PDQV), 90–135 (EIRS…RIEN), 136–171 (PALD…DPKN), 172–208 (PEFT…SPDN), 244–277 (IDTL…LPNN), 278–333 (AYVH…MLEY), 334–364 (SCSF…KDLP), 365–403 (PGPK…KKKT), and 404–445 (IPQK…GGQQ). Positions 441–472 (GGGQQADKDSERGVDSANQVPSASLDEDGAEY) are disordered.

This sequence belongs to the IFIT family. As to quaternary structure, domain-swapped homodimer. Component of an interferon-dependent multiprotein complex, at least composed of IFIT1, IFIT2 and IFIT3. Interacts with IFIT1 and IFIT3. Interacts with STING1/MITA and disrupts its interaction with MAVS or TBK1. Interacts with EIF3C.

It localises to the cytoplasm. The protein resides in the endoplasmic reticulum. In terms of biological role, IFN-induced antiviral protein which inhibits expression of viral messenger RNAs lacking 2'-O-methylation of the 5' cap. The ribose 2'-O-methylation would provide a molecular signature to distinguish between self and non-self mRNAs by the host during viral infection. Viruses evolved several ways to evade this restriction system such as encoding their own 2'-O-methylase for their mRNAs or by stealing host cap containing the 2'-O-methylation (cap snatching mechanism). Binds AU-rich viral RNAs, with or without 5' triphosphorylation, RNA-binding is required for antiviral activity. Can promote apoptosis. The polypeptide is Interferon-induced protein with tetratricopeptide repeats 2 (Ifit2) (Mus musculus (Mouse)).